Reading from the N-terminus, the 207-residue chain is Dephospho-CoA kinase (207 aa).

Positions 10–207 (ILGLTGGIGS…FYLTLRGGQP (198 aa)) constitute a DPCK domain. 18–23 (GSGKSA) serves as a coordination point for ATP.

It belongs to the CoaE family.

Its subcellular location is the cytoplasm. It carries out the reaction 3'-dephospho-CoA + ATP = ADP + CoA + H(+). It participates in cofactor biosynthesis; coenzyme A biosynthesis; CoA from (R)-pantothenate: step 5/5. In terms of biological role, catalyzes the phosphorylation of the 3'-hydroxyl group of dephosphocoenzyme A to form coenzyme A. This Pseudomonas putida (Arthrobacter siderocapsulatus) protein is Dephospho-CoA kinase.